The following is a 629-amino-acid chain: tRNA uridine 5-carboxymethylaminomethyl modification enzyme MnmG (629 aa).

FAD-binding positions include 15 to 20 (GAGHAG), Val-127, and Ser-182. The interval 203–226 (TPPRVKSSTIDYSKTEEQPGDDHP) is disordered. Over residues 215–226 (SKTEEQPGDDHP) the composition is skewed to basic and acidic residues. NAD(+) is bound at residue 274-288 (GARYCPSIEDKIVRF). Position 371 (Gln-371) interacts with FAD.

It belongs to the MnmG family. In terms of assembly, homodimer. Heterotetramer of two MnmE and two MnmG subunits. Requires FAD as cofactor.

It localises to the cytoplasm. Functionally, NAD-binding protein involved in the addition of a carboxymethylaminomethyl (cmnm) group at the wobble position (U34) of certain tRNAs, forming tRNA-cmnm(5)s(2)U34. In Listeria monocytogenes serovar 1/2a (strain ATCC BAA-679 / EGD-e), this protein is tRNA uridine 5-carboxymethylaminomethyl modification enzyme MnmG.